The chain runs to 514 residues: Beta-galactoside alpha-2,6-sialyltransferase 2 (514 aa).

Residues 1–10 (MKSSLKQWRR) lie on the Cytoplasmic side of the membrane. A helical; Signal-anchor for type II membrane protein membrane pass occupies residues 11-31 (LALGLILVWALLFLALLSYFM). Residues 32-514 (ESRVDDPHAA…PGFNKVHCEP (483 aa)) are Lumenal-facing. The segment covering 70–92 (ATSSAPSTSSNTQQEQSQEENPS) has biased composition (low complexity). A disordered region spans residues 70–183 (ATSSAPSTSS…TKRVARHGSS (114 aa)). The span at 119–132 (FGTQDVGSRSTGVS) shows a compositional bias: polar residues. The span at 145 to 166 (PQEDEDEEEEVIGGEEEDEEGG) shows a compositional bias: acidic residues. Cystine bridges form between Cys-246–Cys-512, Cys-289–Cys-441, and Cys-459–Cys-470. N-linked (GlcNAc...) asparagine glycosylation is found at Asn-330, Asn-350, and Asn-357.

Belongs to the glycosyltransferase 29 family.

The protein resides in the golgi apparatus. Its subcellular location is the golgi stack membrane. It catalyses the reaction a beta-D-galactoside + CMP-N-acetyl-beta-neuraminate = an N-acetyl-alpha-neuraminyl-(2-&gt;6)-beta-D-galactosyl derivative + CMP + H(+). Its function is as follows. Transfers sialic acid from the donor of substrate CMP-sialic acid to galactose containing acceptor substrates. The polypeptide is Beta-galactoside alpha-2,6-sialyltransferase 2 (st6gal2) (Danio rerio (Zebrafish)).